A 237-amino-acid chain; its full sequence is Ribosomal RNA small subunit methyltransferase G (237 aa).

S-adenosyl-L-methionine-binding positions include Gly78, Phe83, 129–130 (AE), and Arg148.

Belongs to the methyltransferase superfamily. RNA methyltransferase RsmG family.

The protein localises to the cytoplasm. In terms of biological role, specifically methylates the N7 position of a guanine in 16S rRNA. The chain is Ribosomal RNA small subunit methyltransferase G from Streptococcus pyogenes serotype M18 (strain MGAS8232).